A 581-amino-acid chain; its full sequence is Phosphatidylinositol N-acetylglucosaminyltransferase subunit Q (581 aa).

Transmembrane regions (helical) follow at residues 276–298 (ANML…WLHS), 344–366 (LGRF…SPFI), 381–403 (LTVA…YCFY), 446–468 (LFIG…LYYL), and 478–500 (ITVQ…YSLG).

It belongs to the PIGQ family. Component of the glycosylphosphatidylinositol-N-acetylglucosaminyltransferase (GPI-GnT) complex composed at least by PIGA, PIGC, PIGH, PIGP, PIGQ, PIGY and DPM2. Interacts with PIGA, PIGH and PIGC.

It is found in the membrane. It participates in glycolipid biosynthesis; glycosylphosphatidylinositol-anchor biosynthesis. Its function is as follows. Part of the glycosylphosphatidylinositol-N-acetylglucosaminyltransferase (GPI-GnT) complex that catalyzes the transfer of N-acetylglucosamine from UDP-N-acetylglucosamine to phosphatidylinositol and participates in the first step of GPI biosynthesis. The polypeptide is Phosphatidylinositol N-acetylglucosaminyltransferase subunit Q (Mus musculus (Mouse)).